Consider the following 242-residue polypeptide: Endothelial protein C receptor (242 aa).

An N-terminal signal peptide occupies residues 1–17 (MLTKFLPLLLLLLPGCA). Residues 18 to 214 (LCNSDGSQSL…GSQTGRSYTS (197 aa)) lie on the Extracellular side of the membrane. Asn46, Asn63, Asn140, Asn166, and Asn176 each carry an N-linked (GlcNAc...) asparagine glycan. 2 cysteine pairs are disulfide-bonded: Cys119–Cys190 and Cys223–Cys236. A helical transmembrane segment spans residues 215 to 235 (LVLGILMGCFIIAGVAVGIFM). At 236-242 (CTSGRRC) the chain is on the cytoplasmic side.

As to expression, expressed in endothelial cells.

It is found in the membrane. In terms of biological role, binds activated protein C. Enhances protein C activation by the thrombin-thrombomodulin complex; plays a role in the protein C pathway controlling blood coagulation. The protein is Endothelial protein C receptor (Procr) of Mus musculus (Mouse).